A 458-amino-acid chain; its full sequence is Probable Xaa-Pro aminopeptidase pepP (458 aa).

Residues Asp254, Asp265, Glu388, and Glu428 each coordinate Mn(2+).

The protein belongs to the peptidase M24B family. It depends on Mn(2+) as a cofactor.

It catalyses the reaction Release of any N-terminal amino acid, including proline, that is linked to proline, even from a dipeptide or tripeptide.. Functionally, catalyzes the removal of a penultimate prolyl residue from the N-termini of peptides. This is Probable Xaa-Pro aminopeptidase pepP (pepP) from Botryotinia fuckeliana (strain B05.10) (Noble rot fungus).